The primary structure comprises 936 residues: MEPDIIRMYSSSPPPLDNGAEDDDDDEFGEFGGFSEVSPSGVGFVDFDTPDYTRPKEEFVPSNHFMPIHEFSENVDSLTSFKSIKNGNDKDITAELSAPVKGQSDVLLSTTSKEIISSEMLATSIDGMERPGNLNKVVEQRQNVGTLESFSPGDFRTNMNVVHQNKQLESCNGEKPPCLEILTNGFAVLETVNPQGTDDLDNVADSKGRKPLSTHSTEYNLDSVPSPAEEFADFATFSKKERIQLEEIECAVLNDREALTIRENNKINRVNELNSVKEVALGRSLDNKGDTDGEDQVCVSEISIVTNRGFSVEKQGLPTLQQDEFLQSGVQSKAWSLVDSADNSEAIRREQCKTEEKLDLLTSKCAHLCMDSVKTSDDEVGSPKEESRKFTNFQSPNIDPTEENDLDDSLSVKNGDSSNDFVTCNDINEDDFGDFGDFGSASGSTPPFVTGTQDSMSDATFEESSEHFPHFSEPGDDFGEFGDINAVSCQEETILTKSDLKQTSDNLSEECQLARKSSGTGTEPVAKLKNGQEGEIGHFDSVPNIQDDCNGFQDSDDFADFSSAGPSQVVDWNAFEDEQKDSCSWAAFGDQQATESHHRKEAWQSHRTDENIDTPGTPKTHSVPSATSKGAVASGHLQESATSVQTALLNRLERIFEACFPSILVPDAEEEVTSLKHLLETSTLPIKTREALPESGELLDVWTELQDIHDAHGLRYQWGGSHSNKKLLSSLGIDTRNILFTGNKKQPVIVPMYAAGLGMLEPTKEPLKPLSAAEKIASIGQTATMSPDMNTCTSDQFQESLPPVQFDWSSSGLTNPLDASGGSTLLNLDFFGPVDDSSSSSSTTIPGVDPELYELTTSKLEISTSSLKVTDAFARLMSTVEKTSTSTRKPKREEHLSEEAIKVIAGLPDLTFMHAKVLMFPATLTPSTSSQEKADG.

The disordered stretch occupies residues Met-1–Glu-36. The interaction with AP1G1, AP1G2, GGA1 and GGA3 stretch occupies residues Met-1–Glu-523. The span at Gly-19 to Gly-29 shows a compositional bias: acidic residues. A WXXF motif 1 motif is present at residues Phe-28–Phe-31. Ser-151 is modified (phosphoserine). 2 disordered regions span residues Thr-197–Ser-216 and Lys-374–Ser-409. Positions Lys-374–Lys-389 are enriched in basic and acidic residues. The segment at Glu-386–Glu-610 is interaction with AP1G1. Phosphoserine is present on Ser-395. A WXXF motif 2 motif is present at residues Phe-432–Phe-435. Residues Gly-436–Phe-438 carry the WXXF motif 3 (partial) motif. The WXXF motif 4 signature appears at Phe-478 to Phe-481. Ser-518 is modified (phosphoserine). The disordered stretch occupies residues Gly-589–Leu-637. The segment covering Glu-595–Glu-610 has biased composition (basic and acidic residues). At Thr-617 the chain carries Phosphothreonine. A compositionally biased stretch (polar residues) spans Thr-617–Ser-628. Positions Tyr-716 to Trp-718 match the CLTCL1/Clathrin-binding motif. Residues Leu-825–Asp-829 are clathrin-binding.

As to quaternary structure, self-associates. Interacts with GGA1 (via GAE domain). Interacts with GGA3 (via GAE domain), AP1G1 (via GAE domain) and AP1G2 (via GAE domain). Component of the aftiphilin/p200/gamma-synergin complex, at least composed of AFTPH/aftiphilin, HEATR5B/p200a and SYNRG/gamma-synergin, which plays a role in the AP1G1/AP-1-mediated protein trafficking from early to recycling endosomes. Within the complex interacts with HEATR5B/p200a and SYNRG/gamma-synergin; the interactions are direct. Interacts with AP1G1/AP-1; the interaction is required to recruit AFTPH/aftiphilin to the perinuclear region of the cell. Interacts with CLTCL1/Clathrin.

Its subcellular location is the cytoplasm. It is found in the perinuclear region. It localises to the cytoplasmic vesicle. The protein localises to the clathrin-coated vesicle. Functionally, component of clathrin-coated vesicles. Component of the aftiphilin/p200/gamma-synergin complex, which plays roles in AP1G1/AP-1-mediated protein trafficking including the trafficking of transferrin from early to recycling endosomes, and the membrane trafficking of furin and the lysosomal enzyme cathepsin D between the trans-Golgi network (TGN) and endosomes. The polypeptide is Aftiphilin (AFTPH) (Homo sapiens (Human)).